Reading from the N-terminus, the 358-residue chain is Tripartite motif-containing protein 54 (358 aa).

The RING-type zinc finger occupies cysteine 26–arginine 82. Residues glutamate 121 to leucine 163 form a B box-type zinc finger. Zn(2+) is bound by residues cysteine 126, histidine 129, cysteine 149, and histidine 155. Residues lysine 168–glutamine 211 form a mediates microtubule-binding and homooligomerization region. Positions glutamine 194–glutamate 258 form a coiled coil. Positions methionine 271–glutamine 329 constitute a COS domain. Positions isoleucine 326–proline 358 are disordered. The span at glycine 334–glutamate 345 shows a compositional bias: acidic residues.

As to quaternary structure, homooligomer and heterooligomer. Interacts with TRIM63 and probably with TRIM55. Interacts with tubulin.

It is found in the cytoplasm. It localises to the cytoskeleton. The protein resides in the myofibril. The protein localises to the sarcomere. Its subcellular location is the z line. Functionally, may bind and stabilize microtubules during myotubes formation. The polypeptide is Tripartite motif-containing protein 54 (TRIM54) (Pongo abelii (Sumatran orangutan)).